We begin with the raw amino-acid sequence, 91 residues long: Small ribosomal subunit protein uS19 (91 aa).

This sequence belongs to the universal ribosomal protein uS19 family.

Functionally, protein S19 forms a complex with S13 that binds strongly to the 16S ribosomal RNA. This chain is Small ribosomal subunit protein uS19, found in Laribacter hongkongensis (strain HLHK9).